The following is a 228-amino-acid chain: Ureidoacrylate amidohydrolase RutB (228 aa).

Asp-23 (proton acceptor) is an active-site residue. Residue Lys-132 is part of the active site. Residue Cys-165 is the Nucleophile of the active site.

It belongs to the isochorismatase family. RutB subfamily.

The catalysed reaction is (Z)-3-ureidoacrylate + H2O + H(+) = (Z)-3-aminoacrylate + NH4(+) + CO2. The enzyme catalyses (Z)-3-ureidoacrylate + H2O = (Z)-3-aminoacrylate + carbamate + H(+). It carries out the reaction (Z)-2-methylureidoacrylate + H2O + H(+) = (Z)-2-methylaminoacrylate + NH4(+) + CO2. Hydrolyzes ureidoacrylate to form aminoacrylate and carbamate. The carbamate hydrolyzes spontaneously, thereby releasing one of the nitrogen atoms of the pyrimidine ring as ammonia and one of its carbon atoms as CO2. The chain is Ureidoacrylate amidohydrolase RutB from Agrobacterium fabrum (strain C58 / ATCC 33970) (Agrobacterium tumefaciens (strain C58)).